The primary structure comprises 2193 residues: Genome polyprotein (2193 aa).

Residue glycine 2 is the site of N-myristoyl glycine; by host attachment. Topologically, residues 2–1503 are cytoplasmic; it reads GAQVSTQKTG…HVSRAFICLQ (1502 aa). Residues 565-582 are amphipathic alpha-helix; that stretch reads QLLQGDVEEAVNRAVARV. Active-site for protease 2A activity residues include histidine 880 and aspartate 898. Cysteine 915 and cysteine 917 together coordinate Zn(2+). The For protease 2A activity role is filled by cysteine 969. Cysteine 975 and histidine 977 together coordinate Zn(2+). The segment at 1109 to 1181 is membrane-binding; that stretch reads SNGWLKKFTE…EQSAPSQSDQ (73 aa). Positions 1109-1247 are oligomerization; that stretch reads SNGWLKKFTE…SPGAGKSVAT (139 aa). An RNA-binding region spans residues 1130–1134; that stretch reads AIKIQ. Positions 1213-1369 constitute an SF3 helicase domain; the sequence is EKKMSNYIQF…SMYSQNGKIN (157 aa). 3 residues coordinate Zn(2+): cysteine 1377, cysteine 1389, and cysteine 1394. The C4-type; degenerate zinc finger occupies 1377–1394; it reads CDEECCPVNFKRCCPLVC. Residues 1421–1428 form an RNA-binding region; that stretch reads EYNHRHSV. An oligomerization region spans residues 1432–1437; that stretch reads LEALFQ. An intramembrane segment occupies 1504 to 1519; that stretch reads ALTTFVSVAGIIYIIY. Topologically, residues 1520-2193 are cytoplasmic; that stretch reads KLFAGFQGAY…TLRRKWLDSF (674 aa). An O-(5'-phospho-RNA)-tyrosine modification is found at tyrosine 1529. The Peptidase C3 domain maps to 1549-1727; sequence GPAFEFAVAM…FSAALLRHYF (179 aa). Catalysis depends on for protease 3C activity residues histidine 1588, glutamate 1619, and cysteine 1695. The RdRp catalytic domain occupies 1958–2074; the sequence is GHLIAFDYSG…SYPWPIDASL (117 aa). Residues aspartate 1964 and aspartate 2060 each contribute to the Mg(2+) site.

It belongs to the picornaviruses polyprotein family. Interacts with capsid protein VP1 and capsid protein VP3 to form heterotrimeric protomers. In terms of assembly, interacts with capsid protein VP0, and capsid protein VP3 to form heterotrimeric protomers. Five protomers subsequently associate to form pentamers which serve as building blocks for the capsid. Interacts with capsid protein VP2, capsid protein VP3 and capsid protein VP4 following cleavage of capsid protein VP0. As to quaternary structure, interacts with capsid protein VP1 and capsid protein VP3 in the mature capsid. Interacts with host CD55; this interaction promotes virus attachment to the host cell and subsequent internalization. Interacts with capsid protein VP0 and capsid protein VP1 to form heterotrimeric protomers. Five protomers subsequently associate to form pentamers which serve as building blocks for the capsid. Interacts with capsid protein VP4 in the mature capsid. Interacts with protein 2C; this interaction may be important for virion morphogenesis. Interacts with host CD55; this interaction promotes virus attachment to the host cell and subsequent internalization. In terms of assembly, interacts with capsid protein VP1 and capsid protein VP3. As to quaternary structure, homodimer. Homohexamer; forms a hexameric ring structure with 6-fold symmetry characteristic of AAA+ ATPases. Interacts (via N-terminus) with host RTN3 (via reticulon domain); this interaction is important for viral replication. Interacts with capsid protein VP3; this interaction may be important for virion morphogenesis. In terms of assembly, interacts with protein 3CD. As to quaternary structure, homodimer. Interacts with host GBF1. Interacts (via GOLD domain) with host ACBD3 (via GOLD domain); this interaction allows the formation of a viral protein 3A/ACBD3 heterotetramer with a 2:2 stoichiometry, which will stimulate the recruitment of host PI4KB in order to synthesize PI4P at the viral RNA replication sites. Interacts with RNA-directed RNA polymerase. In terms of assembly, interacts with protein 3AB and with RNA-directed RNA polymerase. As to quaternary structure, interacts with Viral protein genome-linked and with protein 3CD. Mg(2+) serves as cofactor. In terms of processing, specific enzymatic cleavages in vivo by the viral proteases yield processing intermediates and the mature proteins. Post-translationally, myristoylation is required for the formation of pentamers during virus assembly. Further assembly of 12 pentamers and a molecule of genomic RNA generates the provirion. During virion maturation, immature virions are rendered infectious following cleavage of VP0 into VP4 and VP2. This maturation seems to be an autocatalytic event triggered by the presence of RNA in the capsid and it is followed by a conformational change infectious virion. In terms of processing, myristoylation is required during RNA encapsidation and formation of the mature virus particle. Post-translationally, VPg is uridylylated by the polymerase into VPg-pUpU. This acts as a nucleotide-peptide primer for the genomic RNA replication.

The protein localises to the virion. It localises to the host cytoplasm. Its subcellular location is the host cytoplasmic vesicle membrane. The protein resides in the host nucleus. The enzyme catalyses a ribonucleoside 5'-triphosphate + H2O = a ribonucleoside 5'-diphosphate + phosphate + H(+). It catalyses the reaction Selective cleavage of Tyr-|-Gly bond in the picornavirus polyprotein.. It carries out the reaction RNA(n) + a ribonucleoside 5'-triphosphate = RNA(n+1) + diphosphate. The catalysed reaction is Selective cleavage of Gln-|-Gly bond in the poliovirus polyprotein. In other picornavirus reactions Glu may be substituted for Gln, and Ser or Thr for Gly.. Replication or transcription is subject to high level of random mutations by the nucleotide analog ribavirin. Functionally, forms an icosahedral capsid of pseudo T=3 symmetry with capsid proteins VP2 and VP3. The capsid is 300 Angstroms in diameter, composed of 60 copies of each capsid protein and enclosing the viral positive strand RNA genome. Capsid protein VP1 mainly forms the vertices of the capsid. Capsid protein VP1 interacts with host cell receptor to provide virion attachment to target host cells. This attachment induces virion internalization. Tyrosine kinases are probably involved in the entry process. After binding to its receptor, the capsid undergoes conformational changes. Capsid protein VP1 N-terminus (that contains an amphipathic alpha-helix) and capsid protein VP4 are externalized. Together, they shape a pore in the host membrane through which viral genome is translocated to host cell cytoplasm. In terms of biological role, forms an icosahedral capsid of pseudo T=3 symmetry with capsid proteins VP2 and VP3. The capsid is 300 Angstroms in diameter, composed of 60 copies of each capsid protein and enclosing the viral positive strand RNA genome. Its function is as follows. Lies on the inner surface of the capsid shell. After binding to the host receptor, the capsid undergoes conformational changes. Capsid protein VP4 is released, Capsid protein VP1 N-terminus is externalized, and together, they shape a pore in the host membrane through which the viral genome is translocated into the host cell cytoplasm. Component of immature procapsids, which is cleaved into capsid proteins VP4 and VP2 after maturation. Allows the capsid to remain inactive before the maturation step. Functionally, cysteine protease that cleaves viral polyprotein and specific host proteins. It is responsible for the autocatalytic cleavage between the P1 and P2 regions, which is the first cleavage occurring in the polyprotein. Also cleaves the host translation initiation factor EIF4G1, in order to shut down the capped cellular mRNA translation. Inhibits the host nucleus-cytoplasm protein and RNA trafficking by cleaving host members of the nuclear pores. Counteracts stress granule formation probably by antagonizing its assembly or promoting its dissassembly. In terms of biological role, plays an essential role in the virus replication cycle by acting as a viroporin. Creates a pore in the host endoplasmic reticulum and as a consequence releases Ca2+ in the cytoplasm of infected cell. In turn, high levels of cytoplasmic calcium may trigger membrane trafficking and transport of viral ER-associated proteins to viroplasms, sites of viral genome replication. Its function is as follows. Induces and associates with structural rearrangements of intracellular membranes. Displays RNA-binding, nucleotide binding and NTPase activities. May play a role in virion morphogenesis and viral RNA encapsidation by interacting with the capsid protein VP3. Localizes the viral replication complex to the surface of membranous vesicles. Together with protein 3CD binds the Cis-Active RNA Element (CRE) which is involved in RNA synthesis initiation. Acts as a cofactor to stimulate the activity of 3D polymerase, maybe through a nucleid acid chaperone activity. Functionally, localizes the viral replication complex to the surface of membranous vesicles. It inhibits host cell endoplasmic reticulum-to-Golgi apparatus transport and causes the disassembly of the Golgi complex, possibly through GBF1 interaction. This would result in depletion of MHC, trail receptors and IFN receptors at the host cell surface. Plays an essential role in viral RNA replication by recruiting ACBD3 and PI4KB at the viral replication sites, thereby allowing the formation of the rearranged membranous structures where viral replication takes place. In terms of biological role, acts as a primer for viral RNA replication and remains covalently bound to viral genomic RNA. VPg is uridylylated prior to priming replication into VPg-pUpU. The oriI viral genomic sequence may act as a template for this. The VPg-pUpU is then used as primer on the genomic RNA poly(A) by the RNA-dependent RNA polymerase to replicate the viral genome. During genome replication, the VPg-RNA linkage is removed by the host TDP2, thereby accelerating replication. During the late stage of the replication cycle, host TDP2 is excluded from sites of viral RNA synthesis and encapsidation, allowing for the generation of progeny virions. Its function is as follows. Involved in the viral replication complex and viral polypeptide maturation. It exhibits protease activity with a specificity and catalytic efficiency that is different from protease 3C. Protein 3CD lacks polymerase activity. Protein 3CD binds to the 5'UTR of the viral genome. Replicates the viral genomic RNA on the surface of intracellular membranes. May form linear arrays of subunits that propagate along a strong head-to-tail interaction called interface-I. Covalently attaches UMP to a tyrosine of VPg, which is used to prime RNA synthesis. The positive stranded RNA genome is first replicated at virus induced membranous vesicles, creating a dsRNA genomic replication form. This dsRNA is then used as template to synthesize positive stranded RNA genomes. ss(+)RNA genomes are either translated, replicated or encapsidated. Functionally, major viral protease that mediates proteolytic processing of the polyprotein. Cleaves host EIF5B, contributing to host translation shutoff. Also cleaves host PABPC1, contributing to host translation shutoff. Cleaves host NLRP1, triggers host N-glycine-mediated degradation of the autoinhibitory NLRP1 N-terminal fragment. This is Genome polyprotein from Echovirus 12 (strain Travis).